Here is a 240-residue protein sequence, read N- to C-terminus: Aquaporin Z (240 aa).

2 consecutive transmembrane segments (helical) span residues 10 to 30 (MIGT…AAGF) and 35 to 55 (IGLV…AYAI). An NPA 1 motif is present at residues 64–66 (NPA). 3 consecutive transmembrane segments (helical) span residues 90 to 110 (VLGA…AAGF), 131 to 151 (LVAC…VIMG), and 160 to 180 (GFAP…SIPV). Residues 186–188 (NPA) carry the NPA 2 motif. A helical membrane pass occupies residues 202 to 222 (IGQLWLFWVAPLLGGVLGGVI).

This sequence belongs to the MIP/aquaporin (TC 1.A.8) family. As to quaternary structure, homotetramer.

The protein localises to the cell inner membrane. The enzyme catalyses H2O(in) = H2O(out). Functionally, channel that permits osmotically driven movement of water in both directions. It is involved in the osmoregulation and in the maintenance of cell turgor during volume expansion in rapidly growing cells. It mediates rapid entry or exit of water in response to abrupt changes in osmolarity. The sequence is that of Aquaporin Z from Rhodopseudomonas palustris (strain ATCC BAA-98 / CGA009).